The following is an 84-amino-acid chain: Putative membrane protein insertion efficiency factor (84 aa).

A disordered region spans residues 63–84 (WGGSGYDPVPGADPEHDRRPRG). Residues 75–84 (DPEHDRRPRG) show a composition bias toward basic and acidic residues.

The protein belongs to the UPF0161 family.

Its subcellular location is the cell inner membrane. Its function is as follows. Could be involved in insertion of integral membrane proteins into the membrane. In Cereibacter sphaeroides (strain ATCC 17025 / ATH 2.4.3) (Rhodobacter sphaeroides), this protein is Putative membrane protein insertion efficiency factor.